We begin with the raw amino-acid sequence, 1059 residues long: Dihydropyrimidine dehydrogenase [NADP(+)] (1059 aa).

Residues 84 to 118 enclose the 4Fe-4S ferredoxin-type 1 domain; sequence ERGALKEAMRCLKCADAPCQKSCPTQLDVKSFITS. Residues Cys-94, Cys-97, Cys-102, Cys-106, Cys-145, Cys-151, Cys-155, and Gln-171 each coordinate [4Fe-4S] cluster. FAD contacts are provided by residues 207–211, 231–239, Arg-248, and Leu-274; these read GCGPA and EKRAYIGGL. NADP(+) contacts are provided by residues 354–357, 378–379, Arg-385, 451–453, and 495–501; these read AGDT, RK, AFG, and DVAGVAE. 494–503 is a binding site for FAD; the sequence is GDVAGVAETT. FMN-binding positions include Ser-564 and 588–589; that span reads KT. Substrate is bound by residues Asn-623 and 682–684; that span reads NLS. The Proton acceptor role is filled by Cys-685. FMN is bound at residue Lys-723. 750–751 contacts substrate; the sequence is NT. Residues Gly-781, 807 to 809, and 830 to 831 contribute to the FMN site; these read TGG and CS. 4Fe-4S ferredoxin-type domains are found at residues 955-987 and 989-1019; these read KVAI…FDPV and HQPH…MVPR. Positions 964, 967, 970, 974, 998, 1001, 1004, and 1008 each coordinate [4Fe-4S] cluster.

Belongs to the dihydropyrimidine dehydrogenase family. [4Fe-4S] cluster serves as cofactor. FAD is required as a cofactor. The cofactor is FMN.

It carries out the reaction 5,6-dihydrouracil + NADP(+) = uracil + NADPH + H(+). The protein operates within amino-acid biosynthesis; beta-alanine biosynthesis. In terms of biological role, involved in pyrimidine base degradation. Catalyzes the reduction of uracil and thymine. Involved in the degradation of the chemotherapeutic drug 5-fluorouracil. The protein is Dihydropyrimidine dehydrogenase [NADP(+)] (dpyd-1) of Caenorhabditis elegans.